A 393-amino-acid polypeptide reads, in one-letter code: Sulfate adenylyltransferase (393 aa).

It belongs to the sulfate adenylyltransferase family.

The catalysed reaction is sulfate + ATP + H(+) = adenosine 5'-phosphosulfate + diphosphate. It participates in sulfur metabolism; hydrogen sulfide biosynthesis; sulfite from sulfate: step 1/3. The protein is Sulfate adenylyltransferase of Symbiobacterium thermophilum (strain DSM 24528 / JCM 14929 / IAM 14863 / T).